Here is a 314-residue protein sequence, read N- to C-terminus: Homoserine O-acetyltransferase (314 aa).

Cys-142 (acyl-thioester intermediate) is an active-site residue. The substrate site is built by Lys-163 and Ser-192. Residue His-235 is the Proton acceptor of the active site. Residue Glu-237 is part of the active site. Arg-249 is a substrate binding site.

Belongs to the MetA family.

The protein localises to the cytoplasm. It carries out the reaction L-homoserine + acetyl-CoA = O-acetyl-L-homoserine + CoA. It functions in the pathway amino-acid biosynthesis; L-methionine biosynthesis via de novo pathway; O-acetyl-L-homoserine from L-homoserine: step 1/1. Functionally, transfers an acetyl group from acetyl-CoA to L-homoserine, forming acetyl-L-homoserine. The chain is Homoserine O-acetyltransferase from Streptococcus pneumoniae (strain JJA).